Consider the following 279-residue polypeptide: GATA transcription factor 15 (279 aa).

The tract at residues 52-94 (AYDDHSTVTTSPSSPSSSSTGSVDCTLSLGTPSSRRAEPVAAA) is disordered. Low complexity predominate over residues 58–74 (TVTTSPSSPSSSSTGSV). The segment at 154 to 179 (CANCGTASTPLWRNGPRGPKSLCNAC) adopts a GATA-type zinc-finger fold.

It belongs to the type IV zinc-finger family. Class B subfamily. As to expression, highly expressed in inflorescences. Expressed in vascular bundles of root stele within the elongation zones, of elongating upper internodes and of the junctions of leaf blades and sheaths.

In terms of biological role, probable transcription factor that regulates organogenesis during transition from the vegetative to the reproductive phase. Regulates the expression of CYP78A11/PLA1, HD3A and MADS1 during reproductive development in rice. May act upstream of CYP78A11/PLA1 during panicle development. Acts independently of the photoperiodic and gibberellin signaling pathways. In Oryza sativa subsp. japonica (Rice), this protein is GATA transcription factor 15.